The chain runs to 293 residues: Proline iminopeptidase (293 aa).

The region spanning 28–277 (PLVLLHGGPG…NCGHMSFVEK (250 aa)) is the AB hydrolase-1 domain. Ser-105 serves as the catalytic Nucleophile. Residue Asp-244 is part of the active site. Residue His-271 is the Proton donor of the active site.

Belongs to the peptidase S33 family.

Its subcellular location is the cell envelope. The catalysed reaction is Release of N-terminal proline from a peptide.. Functionally, releases the N-terminal proline from various substrates. The polypeptide is Proline iminopeptidase (Lactobacillus crispatus (strain ST1)).